The following is a 525-amino-acid chain: Coronin-2A (525 aa).

WD repeat units lie at residues N24–L71, D72–T122, A123–T170, S171–V214, L215–S259, V260–P305, and H306–K342. Positions Q485 to Q524 form a coiled coil.

The protein belongs to the WD repeat coronin family. In terms of assembly, binds actin. Component of the N-Cor repressor complex, at least composed of NCOR1, NCOR2, HDAC3, TBL1X, TBL1R, CORO2A and GPS2.

This is Coronin-2A (CORO2A) from Homo sapiens (Human).